A 456-amino-acid polypeptide reads, in one-letter code: uncharacterized protein (456 aa).

In terms of domain architecture, TRAM spans 3-61; that stretch reads LMRKNETREFLIEDIEFPAVGVAFYNDKKVYIKGAVPGQKVLARVSKVRREKIEAKLKE. Residues C74, C80, C83, and C163 each coordinate [4Fe-4S] cluster. S-adenosyl-L-methionine contacts are provided by Q289, Y318, E339, and D384. C411 serves as the catalytic Nucleophile.

It belongs to the class I-like SAM-binding methyltransferase superfamily. RNA M5U methyltransferase family.

This is an uncharacterized protein from Clostridium acetobutylicum (strain ATCC 824 / DSM 792 / JCM 1419 / IAM 19013 / LMG 5710 / NBRC 13948 / NRRL B-527 / VKM B-1787 / 2291 / W).